The primary structure comprises 150 residues: Probable deoxyuridine 5'-triphosphate nucleotidohydrolase (150 aa).

This sequence belongs to the dCTP deaminase family. Archaeal dUTPase subfamily.

It catalyses the reaction dUTP + H2O = dUMP + diphosphate + H(+). It functions in the pathway pyrimidine metabolism; dUMP biosynthesis; dUMP from dCTP (dUTP route): step 2/2. In terms of biological role, this enzyme is involved in nucleotide metabolism: it produces dUMP, the immediate precursor of thymidine nucleotides and it decreases the intracellular concentration of dUTP so that uracil cannot be incorporated into DNA. The polypeptide is Probable deoxyuridine 5'-triphosphate nucleotidohydrolase (Methanothermobacter thermautotrophicus (strain ATCC 29096 / DSM 1053 / JCM 10044 / NBRC 100330 / Delta H) (Methanobacterium thermoautotrophicum)).